We begin with the raw amino-acid sequence, 140 residues long: Putative pre-16S rRNA nuclease (140 aa).

Belongs to the YqgF nuclease family.

Its subcellular location is the cytoplasm. Functionally, could be a nuclease involved in processing of the 5'-end of pre-16S rRNA. The protein is Putative pre-16S rRNA nuclease of Edwardsiella ictaluri (strain 93-146).